The primary structure comprises 221 residues: Redox-sensing transcriptional repressor Rex (221 aa).

A DNA-binding region (H-T-H motif) is located at residues 17–56 (IYYYYLSSLHEAGIKRINSTEISEAIKFDAATVRRDFSYF). 91 to 96 (GTGNLG) provides a ligand contact to NAD(+).

This sequence belongs to the transcriptional regulatory Rex family. In terms of assembly, homodimer.

Its subcellular location is the cytoplasm. In terms of biological role, modulates transcription in response to changes in cellular NADH/NAD(+) redox state. This chain is Redox-sensing transcriptional repressor Rex, found in Oenococcus oeni (strain ATCC BAA-331 / PSU-1).